Here is a 452-residue protein sequence, read N- to C-terminus: Probable ECA polymerase (452 aa).

Transmembrane regions (helical) follow at residues 6–26 (FSGL…LTWF), 37–57 (VFFS…TSVL), 63–83 (VGVA…CFYG), 118–138 (VILM…NGFL), 155–175 (GVAL…VYFL), 181–201 (AWLF…MIVG), 207–227 (IIIA…ISLW), 228–248 (MLAA…LKRY), 341–361 (LVVM…GLII), 378–398 (YKAA…IVLA), and 410–430 (VFFL…FWLF).

This sequence belongs to the WzyE family. In terms of assembly, probably part of a complex composed of WzxE, WzyE and WzzE.

Its subcellular location is the cell inner membrane. The protein operates within bacterial outer membrane biogenesis; enterobacterial common antigen biosynthesis. In terms of biological role, probably involved in the polymerization of enterobacterial common antigen (ECA) trisaccharide repeat units. The protein is Probable ECA polymerase of Salmonella arizonae (strain ATCC BAA-731 / CDC346-86 / RSK2980).